A 125-amino-acid polypeptide reads, in one-letter code: MATFKLVISNPKNGVAKQVEISGPEADKLIGRRIGEEIPASELGLNLSEIFGEEIPADAKLKITGGTDKDGFPMRPDVHGPRRVKILLSRGPGFRPRERGERRKKTVHGNTISPNIVQVNMKIVF.

The protein belongs to the eukaryotic ribosomal protein eS6 family. Part of the 30S ribosomal subunit.

The protein is Small ribosomal subunit protein eS6 of Thermococcus kodakarensis (strain ATCC BAA-918 / JCM 12380 / KOD1) (Pyrococcus kodakaraensis (strain KOD1)).